A 729-amino-acid chain; its full sequence is MSCCDLAAAGQLGKASIMASDCEPALNQAEGRNPTLERYLGALREAKNDSEQFAALLLVTKAVKAGDIDAKTRRRIFDAVGFTFPNRLLTTKEAPDGCPDHVLRALGVALLACFCSDPELAAHPQVLNKIPILSTFLTARGDPDDAARRSMIDDTYQCLTAVAGTPRGPRHLIAGGTVSALCQAYLGHGYGFDQALALLVGLLAAAETQCWKEAEPDLLAVLRGLSEDFQKAEDASKFELCQLLPLFLPPTTVPPECYRDLQAGLARILGSKLSSWQRNPALKLAARLAHACGSDWIPAGSSGSKFLALLVNLACVEVRLALEETGTEVKEDVVTACYALMELGIQECTRCEQSLLKEPQKVQLVSVMKEAIGAVIHYLLQVGSEKQKEPFVFASVRILGAWLAEETSSLRKEVCQLLPFLVRYAKTLYEEAEEANDLSQQVANLAISPTTPGPTWPGDALRLLLPGWCHLTVEDGPREILIKEGAPSLLCKYFLQQWELTSPGHDTSVLPDSVEIGLQTCCHIFLNLVVTAPGLIKRDACFTSLMNTLMTSLPALVQQQGRLLLAANVATLGLLMARLLSTSPALQGTPASRGFFAAAILFLSQSHVARATPGSDQAVLALSPEYEGIWADLQELWFLGMQAFTGCVPLLPWLAPAALRSRWPQELLQLLGSVSPNSVKPEMVAAYQGVLVELARANRLCREAMRLQAGEETASHYRMAALEQCLSEP.

The residue at position 2 (Ser2) is an N-acetylserine. Position 2 is a phosphoserine (Ser2). At Ser2 the chain carries N-acetylalanine. 2 S-palmitoyl cysteine lipidation sites follow: Cys3 and Cys4. Asymmetric dimethylarginine is present on Arg75. Position 448 is a phosphoserine (Ser448).

The protein belongs to the neurochondrin family. As to quaternary structure, interacts with MCHR1. Interacts with SEMA4C. Interacts with DIAPH1 (via FH3 domain). Interacts with GRM5. Post-translationally, palmitoylated. Palmitoylation by ZDHHC1, ZDHHC3 and ZDHHC11 regulates the association of NCDN with endosome membranes. May also be palmitoylated by ZDHHC7. Abundantly expressed in whole adult brain and in all individual brain regions examined, including spinal cord. Weakly expressed in ovary, testis, fetal brain and small intestine.

The protein localises to the cytoplasm. The protein resides in the cytosol. It localises to the endosome membrane. It is found in the cell projection. Its subcellular location is the dendrite. The protein localises to the postsynapse. Probably involved in signal transduction in the nervous system, via increasing cell surface localization of GRM5/mGluR5 and positively regulating its signaling. Required for the spatial learning process. Acts as a negative regulator of Ca(2+)-calmodulin-dependent protein kinase 2 (CaMK2) phosphorylation. May play a role in modulating melanin-concentrating hormone-mediated functions via its interaction with MCHR1 that interferes with G protein-coupled signal transduction. May be involved in bone metabolism. May also be involved in neurite outgrowth. The polypeptide is Neurochondrin (Homo sapiens (Human)).